A 670-amino-acid polypeptide reads, in one-letter code: Probable beta-glucosidase N (670 aa).

An N-terminal signal peptide occupies residues 1 to 21 (MHSNILPVLTSVATLLGLVQG). Asn51 is a glycosylation site (N-linked (GlcNAc...) asparagine). The interval 65 to 87 (FEPSDGVRSVQGSGKDYDNPAMR) is disordered. A glycan (N-linked (GlcNAc...) asparagine) is linked at Asn141. The active site involves Asp152. Asn184, Asn248, Asn330, and Asn417 each carry an N-linked (GlcNAc...) asparagine glycan.

The protein belongs to the glycosyl hydrolase 3 family.

The protein localises to the secreted. The enzyme catalyses Hydrolysis of terminal, non-reducing beta-D-glucosyl residues with release of beta-D-glucose.. It functions in the pathway glycan metabolism; cellulose degradation. Functionally, beta-glucosidases are one of a number of cellulolytic enzymes involved in the degradation of cellulosic biomass. Catalyzes the last step releasing glucose from the inhibitory cellobiose. The protein is Probable beta-glucosidase N (bglN) of Emericella nidulans (strain FGSC A4 / ATCC 38163 / CBS 112.46 / NRRL 194 / M139) (Aspergillus nidulans).